Here is a 701-residue protein sequence, read N- to C-terminus: Elongation factor G (701 aa).

The region spanning 11–287 (TKVRNIGIMA…AVIDYLPSPL (277 aa)) is the tr-type G domain. GTP is bound by residues 20–27 (AHIDAGKT), 84–88 (DTPGH), and 138–141 (NKMD).

Belongs to the TRAFAC class translation factor GTPase superfamily. Classic translation factor GTPase family. EF-G/EF-2 subfamily.

It is found in the cytoplasm. Catalyzes the GTP-dependent ribosomal translocation step during translation elongation. During this step, the ribosome changes from the pre-translocational (PRE) to the post-translocational (POST) state as the newly formed A-site-bound peptidyl-tRNA and P-site-bound deacylated tRNA move to the P and E sites, respectively. Catalyzes the coordinated movement of the two tRNA molecules, the mRNA and conformational changes in the ribosome. The chain is Elongation factor G from Mycobacterium leprae (strain Br4923).